The sequence spans 88 residues: Small ribosomal subunit protein bS16c (88 aa).

It belongs to the bacterial ribosomal protein bS16 family.

It localises to the plastid. The protein resides in the chloroplast. The sequence is that of Small ribosomal subunit protein bS16c from Calycanthus floridus var. glaucus (Eastern sweetshrub).